The chain runs to 105 residues: Large ribosomal subunit protein uL24 (105 aa).

It belongs to the universal ribosomal protein uL24 family. In terms of assembly, part of the 50S ribosomal subunit.

Functionally, one of two assembly initiator proteins, it binds directly to the 5'-end of the 23S rRNA, where it nucleates assembly of the 50S subunit. In terms of biological role, one of the proteins that surrounds the polypeptide exit tunnel on the outside of the subunit. The chain is Large ribosomal subunit protein uL24 from Xanthomonas oryzae pv. oryzae (strain PXO99A).